We begin with the raw amino-acid sequence, 342 residues long: MIIIDGSYGEGGGQILRTSIALSAITGEPVKIINIRANRPNPGLRPQHLNAILALKKLANAKVEGAEVGSREVTFIPGELKGGEIRVDIGTAGSITLVLQALLPAMVFAKDTVEFKITGGTDVSWSPPVDYLINVTMFALRKIGIEGEIKLLRRGHYPKGGGIVAGYVKPWIERKELIAEEFENIYKVSGISHATNLPAHVAERQAKAAMEELKVLGVPIEIKKEVSHSLGPGSGIVVWAETECLRLGGDALGKKGKPAEEVGREAAQELLSQVKTKACVDKFLGDQIIPFLAISGGKIKVAEITKHLITNVWVVEQFFGKVFEVKGGVGEKGEVRVVRKAW.

The protein belongs to the RNA 3'-terminal cyclase family. Type 1 subfamily.

It is found in the cytoplasm. The enzyme catalyses a 3'-end 3'-phospho-ribonucleotide-RNA + GTP = a 3'-end 2',3'-cyclophospho-ribonucleotide-RNA + GMP + diphosphate. With respect to regulation, inhibited by GMP. Catalyzes the GTP-dependent conversion of 3'-phosphate to a 2',3'-cyclic phosphodiester at the end of RNA. The biological role of this enzyme is unknown but it is likely to function in some aspects of cellular RNA processing. This Pyrococcus furiosus (strain ATCC 43587 / DSM 3638 / JCM 8422 / Vc1) protein is RNA 3'-terminal phosphate cyclase.